The primary structure comprises 272 residues: Protein FAM210A (272 aa).

The DUF1279 domain occupies 117 to 229 (DKSISLYQRF…GYMSTPPPVK (113 aa)). A helical membrane pass occupies residues 136–156 (VLIPVHLITSGVWFGTFYYAA). Positions 229-271 (KEYLQDRMEETKELITEKMEETKDRLTEKLQETKEKVSFKKKV) form a coiled coil. The segment at 246 to 272 (KMEETKDRLTEKLQETKEKVSFKKKVE) is disordered.

The protein belongs to the FAM210 family. As to quaternary structure, interacts with ATAD3A.

Its subcellular location is the membrane. The protein localises to the mitochondrion. It is found in the cytoplasm. In terms of biological role, may play a role in the structure and strength of both muscle and bone. This is Protein FAM210A (FAM210A) from Pongo abelii (Sumatran orangutan).